Consider the following 196-residue polypeptide: dTTP/UTP pyrophosphatase (196 aa).

Asp75 acts as the Proton acceptor in catalysis.

The protein belongs to the Maf family. YhdE subfamily. It depends on a divalent metal cation as a cofactor.

Its subcellular location is the cytoplasm. The enzyme catalyses dTTP + H2O = dTMP + diphosphate + H(+). It carries out the reaction UTP + H2O = UMP + diphosphate + H(+). Functionally, nucleoside triphosphate pyrophosphatase that hydrolyzes dTTP and UTP. May have a dual role in cell division arrest and in preventing the incorporation of modified nucleotides into cellular nucleic acids. This Wolbachia pipientis subsp. Culex pipiens (strain wPip) protein is dTTP/UTP pyrophosphatase.